We begin with the raw amino-acid sequence, 1059 residues long: Isoleucine--tRNA ligase (1059 aa).

The short motif at 59 to 69 is the 'HIGH' region element; the sequence is PFANGLPHYGH. Positions 637–641 match the 'KMSKS' region motif; it reads KMSKS. Lysine 640 is an ATP binding site.

It belongs to the class-I aminoacyl-tRNA synthetase family. IleS type 2 subfamily. Monomer. Zn(2+) serves as cofactor.

It is found in the cytoplasm. It catalyses the reaction tRNA(Ile) + L-isoleucine + ATP = L-isoleucyl-tRNA(Ile) + AMP + diphosphate. Functionally, catalyzes the attachment of isoleucine to tRNA(Ile). As IleRS can inadvertently accommodate and process structurally similar amino acids such as valine, to avoid such errors it has two additional distinct tRNA(Ile)-dependent editing activities. One activity is designated as 'pretransfer' editing and involves the hydrolysis of activated Val-AMP. The other activity is designated 'posttransfer' editing and involves deacylation of mischarged Val-tRNA(Ile). The polypeptide is Isoleucine--tRNA ligase (Mycobacterium leprae (strain TN)).